Consider the following 873-residue polypeptide: Nitrate reductase [NADPH] (873 aa).

The segment at T30 to V61 is disordered. C150 is a binding site for Mo-molybdopterin. Residues T512–D587 enclose the Cytochrome b5 heme-binding domain. Heme contacts are provided by H547 and H570. An FAD-binding FR-type domain is found at K616–L729. FAD-binding positions include R672–T675, L689–Y693, K703–T705, and T756. M843–M852 contributes to the NADP(+) binding site.

The protein belongs to the nitrate reductase family. In terms of assembly, homodimer. It depends on FAD as a cofactor. Requires heme as cofactor. The cofactor is Mo-molybdopterin.

It carries out the reaction nitrite + NADP(+) + H2O = nitrate + NADPH + H(+). Nitrate reductase is a key enzyme involved in the first step of nitrate assimilation in plants, fungi and bacteria. This chain is Nitrate reductase [NADPH] (niaD), found in Emericella nidulans (strain FGSC A4 / ATCC 38163 / CBS 112.46 / NRRL 194 / M139) (Aspergillus nidulans).